The primary structure comprises 248 residues: Myelin protein P0 (248 aa).

A signal peptide spans 1-29 (MAPGAPSSSPSPILAALLFSSLVLSPAQA). The region spanning 30–143 (IVVYTDKEVY…DIVGKTSQVT (114 aa)) is the Ig-like V-type domain. Residues 30-153 (IVVYTDKEVY…LYVFEKVPTR (124 aa)) are Extracellular-facing. The cysteines at positions 50 and 127 are disulfide-linked. N122 carries an N-linked (GlcNAc...) (complex) asparagine glycan. The chain crosses the membrane as a helical span at residues 154–179 (YGVVLGAVIGGVLGVVLLVLLLFYVV). The Cytoplasmic segment spans residues 180-248 (RYCWLRRQAA…GLGESRKDKK (69 aa)). At S210 the chain carries Phosphoserine; by PKC. The interval 222–248 (MLDHSRSTKAASEKKAKGLGESRKDKK) is disordered. Basic and acidic residues predominate over residues 224–248 (DHSRSTKAASEKKAKGLGESRKDKK). Phosphoserine occurs at positions 226 and 228. Phosphoserine; by PKC is present on residues S233 and S243.

It belongs to the myelin P0 protein family. In terms of assembly, homodimer and homotetramer. Post-translationally, N-glycosylated; contains sulfate-substituted glycan.

The protein localises to the cell membrane. In terms of biological role, is an adhesion molecule necessary for normal myelination in the peripheral nervous system. It mediates adhesion between adjacent myelin wraps and ultimately drives myelin compaction. The sequence is that of Myelin protein P0 (MPZ) from Equus caballus (Horse).